We begin with the raw amino-acid sequence, 507 residues long: DNA replication licensing factor MCM6 (507 aa).

The 208-residue stretch at L32–V239 folds into the MCM domain. 7 residues coordinate ATP: H45, S85, T86, A87, K88, S89, and N190. The short motif at S214–D217 is the Arginine finger element. The ADP site is built by R305 and E308. K329 is modified (N6-acetyllysine). Positions G365–E392 are disordered. S375, S390, and S448 each carry phosphoserine. Phosphothreonine is present on T477.

Belongs to the MCM family. In terms of assembly, component of the MCM2-7 complex. The complex forms a toroidal hexameric ring with the proposed subunit order MCM2-MCM6-MCM4-MCM7-MCM3-MCM5. Component of the CMG helicase complex, a hexameric ring of related MCM2-7 subunits stabilized by CDC45 and the tetrameric GINS complex. May interact with MCM10. Interacts with TIPIN. Interacts with CDT1. Interacts with MCMBP. Interacts with DDI2. Post-translationally, O-glycosylated (O-GlcNAcylated), in a cell cycle-dependent manner.

Its subcellular location is the nucleus. The protein resides in the chromosome. The enzyme catalyses ATP + H2O = ADP + phosphate + H(+). Its function is as follows. Acts as a component of the MCM2-7 complex (MCM complex) which is the replicative helicase essential for 'once per cell cycle' DNA replication initiation and elongation in eukaryotic cells. Core component of CDC45-MCM-GINS (CMG) helicase, the molecular machine that unwinds template DNA during replication, and around which the replisome is built. The active ATPase sites in the MCM2-7 ring are formed through the interaction surfaces of two neighboring subunits such that a critical structure of a conserved arginine finger motif is provided in trans relative to the ATP-binding site of the Walker A box of the adjacent subunit. The six ATPase active sites, however, are likely to contribute differentially to the complex helicase activity. This is DNA replication licensing factor MCM6 (Mcm6) from Rattus norvegicus (Rat).